Here is a 180-residue protein sequence, read N- to C-terminus: MTVRLREKYYKEVVPALMEEFKFKSIMQVPRLVKIVVNVGVGEAVQNAKAIEAAVNDVAAITGQKPVVTRAKKSVASFKLRAGMPIGVMVTLRGDRMYDFLDRLCSLALPRIRDFRGVSRSSFDGRGNYSIGLKEQIVFPDIDYDKIDKIRGLEVAIVTSAPNDEQAYSLLKRLGMPFRD.

It belongs to the universal ribosomal protein uL5 family. As to quaternary structure, part of the 50S ribosomal subunit; part of the 5S rRNA/L5/L18/L25 subcomplex. Contacts the 5S rRNA and the P site tRNA. Forms a bridge to the 30S subunit in the 70S ribosome.

This is one of the proteins that bind and probably mediate the attachment of the 5S RNA into the large ribosomal subunit, where it forms part of the central protuberance. In the 70S ribosome it contacts protein S13 of the 30S subunit (bridge B1b), connecting the 2 subunits; this bridge is implicated in subunit movement. Contacts the P site tRNA; the 5S rRNA and some of its associated proteins might help stabilize positioning of ribosome-bound tRNAs. The sequence is that of Large ribosomal subunit protein uL5 from Chloroflexus aggregans (strain MD-66 / DSM 9485).